The primary structure comprises 186 residues: ADP-ribosylation factor-like protein 8B (186 aa).

The note=Mediates targeting to membranes intramembrane region spans 1–19 (MLALISRLLDWFRSLFWKE). Residues 29–35 (QYSGKTT), 71–75 (DIGGQ), and 130–133 (NKRD) contribute to the GTP site. K141 is covalently cross-linked (Glycyl lysine isopeptide (Lys-Gly) (interchain with G-Cter in ubiquitin)).

The protein belongs to the small GTPase superfamily. Arf family. As to quaternary structure, interacts with tubulin. Interacts with BORCS5; recruits ARL8B to lysosomes. Interacts with VPS41; the interaction mediates the recruitment of the HOPS complex to lysosomes. Interacts (GTP-bound form) with PLEKHM2 (via RUN domain); the interaction is required to recruit the motor protein kinesin-1 on lysosomes. Interacts (GTP-bound form) with PLEKHM1 (via RUN domain); the interaction is required for PLEKHM1 localization to lysosomes and for ARL8B function in delivery and degradation of endocytic and autophagic cargo in lysosomes. PLEKHM1 and PLEKHM2 compete for interaction with ARL8B. Interacts (GTP-bound form) with RUFY1; the interaction is required for RUFY1 endosomal location. When GTP-bound, interacts with RUFY3 and RUFY4, but not with RUFY1, nor RUFY2. In terms of processing, ubiquitinated at Lys-141 by RNF167, leading to its degradation.

It is found in the late endosome membrane. It localises to the lysosome membrane. Its subcellular location is the cytoplasm. The protein resides in the cytoskeleton. The protein localises to the spindle. It is found in the cell projection. It localises to the axon. Its subcellular location is the synapse. The protein resides in the cytolytic granule membrane. The protein localises to the early endosome membrane. It carries out the reaction GTP + H2O = GDP + phosphate + H(+). Functionally, small GTPase which cycles between active GTP-bound and inactive GDP-bound states. In its active state, binds to a variety of effector proteins playing a key role in the regulation of lysosomal positioning which is important for nutrient sensing, natural killer cell-mediated cytotoxicity and antigen presentation. Along with its effectors, orchestrates lysosomal transport and fusion. Localizes specifically to lysosomal membranes and mediates anterograde lysosomal motility by recruiting PLEKHM2, which in turn recruits the motor protein kinesin-1 on lysosomes. Required for lysosomal and cytolytic granule exocytosis. Critical factor involved in NK cell-mediated cytotoxicity. Drives the polarization of cytolytic granules and microtubule-organizing centers (MTOCs) toward the immune synapse between effector NK lymphocytes and target cells. In neurons, mediates the anterograde axonal long-range transport of presynaptic lysosome-related vesicles required for presynaptic biogenesis and synaptic function. Also acts as a regulator of endosome to lysosome trafficking pathways of special significance for host defense. Recruits RUFY1 onto early endosomes regulating endosomes to trans-Golgi network proteins retrieval. Regulates cargo trafficking to lysosomes by binding to PLEKHM1 and recruiting the HOPS subunit VPS41, resulting in functional assembly of the HOPS complex on lysosomal membranes. Plays an important role in cargo delivery to lysosomes for antigen presentation and microbial killing. Directs the intersection of CD1d with lipid antigens in lysosomes, and plays a role in intersecting phagosomes with lysosomes to generate phagolysosomes that kill microbes. Involved in the process of MHC II presentation. Regulates the delivery of antigens to lysosomes and the formation of MHC II-peptide complexes through the recruitment of the HOPS complex to lysosomes allowing the fusion of late endosomes to lysosomes. May play a role in chromosome segregation. This is ADP-ribosylation factor-like protein 8B (ARL8B) from Pongo abelii (Sumatran orangutan).